The following is a 469-amino-acid chain: MSALTPPTDMPTPTTDKITQAAMETIYLCKFRVSMDGEWLCLRELDDISLTPDPEPTHEDPNYLMANERMNLMNMAKLSIKGLIESALNLGRTLDSDYAPLQQFFVVMEHCLKHGLKAKKTFLGQNKSFWGPLELVEKLVPEAAEITASVKDLPGLKTPVGRGRAWLRLALMQKKLSEYMKALINKKELLSEFYEPNALMMEEEGAIIAGLLVGLNVIDANFCMKGEDLDSQVGVIDFSMYLKDGNSSKGTEGDGQITAILDQKNYVEELNRHLNATVNNLQAKVDALEKSNTKLTGELAVANNRIITLQEEMERVKEESSYILESNRKGPKQDRTAEGQALSEARKHLKEETQLRLDVEKELEMQISMRQEMELAMKMLEKDVCEKQDALVSLRQQLDDLRALKHELAFKLQSSDLGVKQKSELNSRLEEKTNQMAATIKQLEQSEKDLVKQAKTLNSAANKLIPKHH.

Phosphothreonine occurs at positions 5 and 12. 2 positions are modified to phosphoserine: S34 and S49. T51 is modified (phosphothreonine). Residues D95–E227 form the RUN domain. 2 coiled-coil regions span residues N271 to E362 and K422 to K463.

Interacts with PAK1. Interacts (via C-terminus) with Ras-related Rab-5 proteins. Interacts (via C-terminus) with Ras-related Rap-2 proteins. Interacts with PIK3CA and PIK3R1. Interacts (via N-terminus) with FSCN1; this interaction induces neuron axon development. Interacts with DBN1. Interacts (via the second coiled coil) with GTP-, but not GDP-bound ARL8A and ARL8B. Interacts with dynactin/DCTN1 and the dynein intermediate chain DYNC1I1/2. Directly interacts with DYNC1LI1. Post-translationally, phosphorylated by PAK1.

The protein resides in the cytoplasm. It localises to the endomembrane system. Its subcellular location is the cell projection. It is found in the invadopodium. The protein localises to the growth cone. The protein resides in the perikaryon. It localises to the filopodium. Its subcellular location is the lamellipodium. It is found in the lysosome. Its function is as follows. ARL8 effector that promotes the coupling of endolysosomes to dynein-dynactin for retrograde transport along microtubules. Acts by binding both GTP-bound ARL8 and dynein-dynactin. In nonneuronal cells, promotes concentration of endolysosomes in the juxtanuclear area. In hippocampal neurons, drives retrograde transport of endolysosomes from the axon to the soma. Plays a role in the generation of neuronal polarity formation and axon growth. Implicated in the formation of a single axon by developing neurons. May inhibit the formation of additional axons by inhibition of PI3K in minor neuronal processes. Plays a role in the formation of F-actin-enriched protrusive structures at the cell periphery. Plays a role in cytoskeletal organization by regulating the subcellular localization of FSCN1 and DBN1 at axonal growth cones. The protein is Protein RUFY3 of Pongo abelii (Sumatran orangutan).